A 208-amino-acid polypeptide reads, in one-letter code: V-type ATP synthase subunit D (208 aa).

It belongs to the V-ATPase D subunit family.

In terms of biological role, produces ATP from ADP in the presence of a proton gradient across the membrane. The sequence is that of V-type ATP synthase subunit D from Streptococcus pyogenes serotype M3 (strain ATCC BAA-595 / MGAS315).